A 345-amino-acid chain; its full sequence is Protein D345L (345 aa).

It belongs to the asfivirus D345L family. In terms of assembly, interacts with IKKA/CHUK and IKBKB.

The protein localises to the host cytoplasm. Functionally, plays a role in the negative regulation of host NF-kappa-B signaling pathway. Mechanistically, recruits host IKKA/CHUK and IKBKB to suppress their kinase activity towards NFKBIA. This is Protein D345L from African swine fever virus (strain Badajoz 1971 Vero-adapted) (Ba71V).